Reading from the N-terminus, the 358-residue chain is NADH-quinone oxidoreductase subunit H (358 aa).

8 consecutive transmembrane segments (helical) span residues 20–40 (ITVGLVVSVIVKIVIILIPLI), 95–115 (ALFYIGPIMSLAPSFAAWAVI), 128–148 (IGLLYILMITSLSVYGVIIAG), 168–188 (ISYEIAMSAALVCVVMVSGSM), 206–226 (VFSWNWLPLFPIFIVYLISAV), 253–273 (GFAFALFFLAEYIFMILIAAL), 295–315 (TPSAFWMFVKMAAVLYWYLWI), and 334–354 (VLIPIGFAYIVVLGVWMISPL).

Belongs to the complex I subunit 1 family. As to quaternary structure, NDH-1 is composed of 14 different subunits. Subunits NuoA, H, J, K, L, M, N constitute the membrane sector of the complex.

Its subcellular location is the cell inner membrane. The enzyme catalyses a quinone + NADH + 5 H(+)(in) = a quinol + NAD(+) + 4 H(+)(out). Functionally, NDH-1 shuttles electrons from NADH, via FMN and iron-sulfur (Fe-S) centers, to quinones in the respiratory chain. The immediate electron acceptor for the enzyme in this species is believed to be ubiquinone. Couples the redox reaction to proton translocation (for every two electrons transferred, four hydrogen ions are translocated across the cytoplasmic membrane), and thus conserves the redox energy in a proton gradient. This subunit may bind ubiquinone. This Neisseria gonorrhoeae (strain ATCC 700825 / FA 1090) protein is NADH-quinone oxidoreductase subunit H.